Consider the following 85-residue polypeptide: Probable weak neurotoxin 3FTx-Lio1 (85 aa).

An N-terminal signal peptide occupies residues 1 to 18 (MKAVILSLVAAFLYSGYT). Cystine bridges form between cysteine 21–cysteine 42, cysteine 24–cysteine 29, cysteine 35–cysteine 60, cysteine 64–cysteine 75, and cysteine 76–cysteine 81.

This sequence belongs to the three-finger toxin family. Ancestral subfamily. As to expression, expressed by the venom gland.

It is found in the secreted. This chain is Probable weak neurotoxin 3FTx-Lio1, found in Erythrolamprus poecilogyrus (Water snake).